The primary structure comprises 135 residues: UPF0355 protein MRSA252 (135 aa).

The protein belongs to the UPF0355 family.

This chain is UPF0355 protein MRSA252, found in Staphylococcus aureus (strain MRSA252).